We begin with the raw amino-acid sequence, 355 residues long: N-acetyl-gamma-glutamyl-phosphate reductase (355 aa).

Residue C152 is part of the active site.

This sequence belongs to the NAGSA dehydrogenase family. Type 1 subfamily.

The protein localises to the cytoplasm. The enzyme catalyses N-acetyl-L-glutamate 5-semialdehyde + phosphate + NADP(+) = N-acetyl-L-glutamyl 5-phosphate + NADPH + H(+). It participates in amino-acid biosynthesis; L-arginine biosynthesis; N(2)-acetyl-L-ornithine from L-glutamate: step 3/4. Functionally, catalyzes the NADPH-dependent reduction of N-acetyl-5-glutamyl phosphate to yield N-acetyl-L-glutamate 5-semialdehyde. The polypeptide is N-acetyl-gamma-glutamyl-phosphate reductase (Psychrobacter sp. (strain PRwf-1)).